Consider the following 359-residue polypeptide: tRNA N6-adenosine threonylcarbamoyltransferase (359 aa).

The Fe cation site is built by His-115 and His-119. Substrate-binding positions include 137–141 (LVSGG), Asp-170, Gly-183, and Asn-283. Asp-311 contributes to the Fe cation binding site. Residues 328–359 (APDSLDIAPRSRWPLDEKSAPVFGTGRRGAKA) form a disordered region.

It belongs to the KAE1 / TsaD family. Requires Fe(2+) as cofactor.

It is found in the cytoplasm. It carries out the reaction L-threonylcarbamoyladenylate + adenosine(37) in tRNA = N(6)-L-threonylcarbamoyladenosine(37) in tRNA + AMP + H(+). Functionally, required for the formation of a threonylcarbamoyl group on adenosine at position 37 (t(6)A37) in tRNAs that read codons beginning with adenine. Is involved in the transfer of the threonylcarbamoyl moiety of threonylcarbamoyl-AMP (TC-AMP) to the N6 group of A37, together with TsaE and TsaB. TsaD likely plays a direct catalytic role in this reaction. The polypeptide is tRNA N6-adenosine threonylcarbamoyltransferase (Brucella abortus (strain S19)).